The primary structure comprises 170 residues: Lipoprotein signal peptidase (170 aa).

The next 3 helical transmembrane spans lie at 5-25 (IVGV…KAYA), 62-82 (SNLI…VLFV), and 89-111 (STIC…LRFG). Residues Asp-115 and Asp-133 contribute to the active site. The chain crosses the membrane as a helical span at residues 126-146 (WPAFNFADVCVTCGVICFLCL).

It belongs to the peptidase A8 family.

The protein resides in the cell inner membrane. The catalysed reaction is Release of signal peptides from bacterial membrane prolipoproteins. Hydrolyzes -Xaa-Yaa-Zaa-|-(S,diacylglyceryl)Cys-, in which Xaa is hydrophobic (preferably Leu), and Yaa (Ala or Ser) and Zaa (Gly or Ala) have small, neutral side chains.. Its pathway is protein modification; lipoprotein biosynthesis (signal peptide cleavage). Functionally, this protein specifically catalyzes the removal of signal peptides from prolipoproteins. The protein is Lipoprotein signal peptidase of Anaplasma marginale (strain Florida).